The chain runs to 387 residues: Ubiquitin-conjugating enzyme E2 25 (387 aa).

The disordered stretch occupies residues 117–164 (APPVRDDIDEGRGSDISDTTSEPIDDDMAGDGEVDDDDEEEEDDEDAD). Positions 120–131 (VRDDIDEGRGSD) are enriched in basic and acidic residues. The segment covering 139–164 (PIDDDMAGDGEVDDDDEEEEDDEDAD) has biased composition (acidic residues). The UBC core domain maps to 214–380 (TATDRLMKEI…QQIHAKSGWY (167 aa)). The active-site Glycyl thioester intermediate is the Cys315.

The protein belongs to the ubiquitin-conjugating enzyme family. As to expression, in the embryo, expressed in precursor neuron and muscle cells and in other cells such as hypodermal cells. After hatching of L1 larvae and in all subsequent stages, strongest expression in pharyngeal muscle and anal muscle cells. In L4 larvae and adolescent hermaphrodites, also expressed in the vulval muscles. Expression also detected in all four nerve cords and in neurons with weaker levels in all body wall muscles.

Its subcellular location is the cytoplasm. It localises to the nucleus. It catalyses the reaction S-ubiquitinyl-[E1 ubiquitin-activating enzyme]-L-cysteine + [E2 ubiquitin-conjugating enzyme]-L-cysteine = [E1 ubiquitin-activating enzyme]-L-cysteine + S-ubiquitinyl-[E2 ubiquitin-conjugating enzyme]-L-cysteine.. The protein operates within protein modification; protein ubiquitination. In terms of biological role, catalyzes the covalent attachment of ubiquitin to other proteins (Potential). Required for the maintenance of neuromuscular function. The polypeptide is Ubiquitin-conjugating enzyme E2 25 (Caenorhabditis elegans).